A 256-amino-acid polypeptide reads, in one-letter code: Cell division protein DivIB (256 aa).

Residues methionine 1 to lysine 23 are Cytoplasmic-facing. Residues isoleucine 24–tyrosine 44 traverse the membrane as a helical segment. The region spanning phenylalanine 45–arginine 113 is the POTRA domain. The Extracellular segment spans residues phenylalanine 45–lysine 256.

Belongs to the FtsQ/DivIB family. DivIB subfamily.

Its subcellular location is the cell membrane. Its function is as follows. Cell division protein that may be involved in stabilizing or promoting the assembly of the division complex. The protein is Cell division protein DivIB of Clostridium botulinum (strain Loch Maree / Type A3).